The sequence spans 178 residues: Large ribosomal subunit protein uL6 (178 aa).

Belongs to the universal ribosomal protein uL6 family. In terms of assembly, part of the 50S ribosomal subunit.

This protein binds to the 23S rRNA, and is important in its secondary structure. It is located near the subunit interface in the base of the L7/L12 stalk, and near the tRNA binding site of the peptidyltransferase center. The polypeptide is Large ribosomal subunit protein uL6 (Francisella tularensis subsp. tularensis (strain WY96-3418)).